A 403-amino-acid polypeptide reads, in one-letter code: Argininosuccinate synthase (403 aa).

8–16 (AYSGGLDTS) serves as a coordination point for ATP. An L-citrulline-binding site is contributed by tyrosine 87. Glycine 117 provides a ligand contact to ATP. Residues threonine 119, asparagine 123, and aspartate 124 each coordinate L-aspartate. Asparagine 123 contributes to the L-citrulline binding site. Arginine 127, serine 175, glutamate 259, and tyrosine 271 together coordinate L-citrulline.

Belongs to the argininosuccinate synthase family. Type 1 subfamily. As to quaternary structure, homotetramer.

It is found in the cytoplasm. The enzyme catalyses L-citrulline + L-aspartate + ATP = 2-(N(omega)-L-arginino)succinate + AMP + diphosphate + H(+). Its pathway is amino-acid biosynthesis; L-arginine biosynthesis; L-arginine from L-ornithine and carbamoyl phosphate: step 2/3. The protein is Argininosuccinate synthase of Salinispora arenicola (strain CNS-205).